Here is a 345-residue protein sequence, read N- to C-terminus: Microtubule-associated protein Jupiter (345 aa).

The segment covering 1–14 (MISNFDCTDNQASS) has biased composition (polar residues). The disordered stretch occupies residues 1–34 (MISNFDCTDNQASSKVLRPPGGGSSDIFGSEMPQ). Serine 24 is subject to Phosphoserine. Position 35 is a phosphothreonine (threonine 35). Residues 78-87 (QKTVDSHNRL) show a composition bias toward basic and acidic residues. The tract at residues 78 to 100 (QKTVDSHNRLFGEPTRPITPGKN) is disordered. Phosphothreonine is present on residues threonine 92 and threonine 96. Residues serine 105, serine 134, and serine 145 each carry the phosphoserine modification. Disordered regions lie at residues 127–241 (HYNG…QPHS) and 300–345 (EGNP…SGLW). Over residues 132–145 (SGSVSSASSSVSSS) the composition is skewed to low complexity. Over residues 146–164 (TENLKMNSGSRSVFRNMST) the composition is skewed to polar residues. Over residues 177–191 (LCPPSPVRIEPPTPP) the composition is skewed to pro residues. 2 stretches are compositionally biased toward polar residues: residues 212-226 (DNST…NEAC) and 315-326 (DYNQRQESSNAG).

It belongs to the MAP Jupiter family.

It localises to the nucleus. It is found in the cytoplasm. Its subcellular location is the cytoskeleton. The protein resides in the spindle. Functionally, binds to all microtubule populations. The protein is Microtubule-associated protein Jupiter of Drosophila erecta (Fruit fly).